The sequence spans 557 residues: Protein Red (557 aa).

Residues 1 to 90 (MPERDSEPFS…YAKLRQQEIE (90 aa)) form a disordered region. Over residues 16–25 (DGHDVDDPHS) the composition is skewed to basic and acidic residues. The segment covering 42-53 (TPRAAPTSAPPS) has biased composition (low complexity). An N6-acetyllysine mark is found at Lys98 and Lys137. Lys151 is covalently cross-linked (Glycyl lysine isopeptide (Lys-Gly) (interchain with G-Cter in SUMO2)). The disordered stretch occupies residues 181–205 (KEKEEEELMEKPQKETKKDEDPENK). The residue at position 287 (Ser287) is a Phosphoserine. A compositionally biased stretch (basic residues) spans 294-303 (RNKKLKKKDK). The segment at 294–402 (RNKKLKKKDK…PMDVDKGPGS (109 aa)) is disordered. Over residues 304-313 (GKLEEKKPPE) the composition is skewed to basic and acidic residues. Glycyl lysine isopeptide (Lys-Gly) (interchain with G-Cter in SUMO2) cross-links involve residues Lys310 and Lys331. Positions 332-398 (TPRDKERERY…VDDEPMDVDK (67 aa)) are enriched in basic and acidic residues. 17 tandem repeats follow at residues 342–343 (RE), 344–345 (RE), 346–347 (RD), 348–349 (RE), 350–351 (RD), 352–353 (RD), 354–355 (RE), 356–357 (RD), 358–359 (RE), 360–361 (RD), 362–363 (RE), 364–365 (RE), 366–367 (RE), 368–369 (RD), 370–371 (RE), 372–373 (RE), and 374–375 (RE). Residues 342 to 375 (RERERDRERDRDRERDRERDRERERERDRERERE) form a 17 X 2 AA tandem repeats of R-[ED] region. Residues Lys386, Lys388, Lys404, and Lys408 each participate in a glycyl lysine isopeptide (Lys-Gly) (interchain with G-Cter in SUMO2) cross-link. A phosphoserine mark is found at Ser417 and Ser460. Thr485 is modified (phosphothreonine). Glycyl lysine isopeptide (Lys-Gly) (interchain with G-Cter in SUMO2) cross-links involve residues Lys496, Lys501, and Lys509. Phosphoserine is present on Ser536. Glycyl lysine isopeptide (Lys-Gly) (interchain with G-Cter in SUMO2) cross-links involve residues Lys541, Lys543, Lys544, and Lys553.

Belongs to the RED family. As to quaternary structure, component of the spliceosome B complex. Interacts with SMU1. Interacts with MAD1L1. May interact with DHX15.

Its subcellular location is the nucleus. It is found in the nucleoplasm. It localises to the chromosome. The protein resides in the cytoplasm. The protein localises to the cytoskeleton. Its subcellular location is the spindle pole. Its function is as follows. Involved in pre-mRNA splicing as a component of the spliceosome. Auxiliary spliceosomal protein that regulates selection of alternative splice sites in a small set of target pre-mRNA species. Required for normal mitotic cell cycle progression. Recruits MAD1L1 and MAD2L1 to kinetochores, and is required to trigger the spindle assembly checkpoint. Required for normal accumulation of SMU1. This is Protein Red (Ik) from Rattus norvegicus (Rat).